Consider the following 467-residue polypeptide: Putative serine/threonine-protein kinase R400 (467 aa).

The Protein kinase domain occupies 99–467 (GVKLIYIKSG…STGQKPTKKV (369 aa)). Residues 105–113 (IKSGTTGHT) and Lys129 each bind ATP. Asp272 acts as the Proton acceptor in catalysis. Residues 443–467 (LFQQGNGSKQPVPKKSTGQKPTKKV) are disordered. A compositionally biased stretch (polar residues) spans 458–467 (STGQKPTKKV).

This sequence belongs to the protein kinase superfamily. Ser/Thr protein kinase family.

It is found in the virion. It catalyses the reaction L-seryl-[protein] + ATP = O-phospho-L-seryl-[protein] + ADP + H(+). The enzyme catalyses L-threonyl-[protein] + ATP = O-phospho-L-threonyl-[protein] + ADP + H(+). The polypeptide is Putative serine/threonine-protein kinase R400 (Acanthamoeba polyphaga mimivirus (APMV)).